Consider the following 221-residue polypeptide: Fanconi anemia core complex-associated protein 24 (221 aa).

In terms of assembly, belongs to the multisubunit FA complex composed of FANCA, FANCB, FANCC, FANCE, FANCF, FANCG, FANCL/PHF9, FANCM and FAAP24. Interacts with FANCM.

The protein localises to the nucleus. Its function is as follows. Plays a role in DNA repair through recruitment of the FA core complex to damaged DNA. Regulates FANCD2 monoubiquitination upon DNA damage. Induces chromosomal instability as well as hypersensitivity to DNA cross-linking agents, when repressed. Targets FANCM/FAAP24 complex to the DNA, preferentially to single strand DNA. The sequence is that of Fanconi anemia core complex-associated protein 24 from Mus musculus (Mouse).